A 595-amino-acid chain; its full sequence is Metacaspase-1 (595 aa).

Active-site residues include H411 and C466.

The protein belongs to the peptidase C14B family. As to quaternary structure, monomer.

Its activity is regulated as follows. Activated by Ca(2+). In terms of biological role, cysteine protease that cleaves specifically after arginine or lysine residues. The polypeptide is Metacaspase-1 (Plasmodium berghei (strain Anka)).